Consider the following 205-residue polypeptide: Small ribosomal subunit protein uS4c (205 aa).

The S4 RNA-binding domain occupies 93–154 (MRLDNTIFRL…RTQTIALIQQ (62 aa)).

The protein belongs to the universal ribosomal protein uS4 family. As to quaternary structure, part of the 30S ribosomal subunit. Contacts protein S5. The interaction surface between S4 and S5 is involved in control of translational fidelity.

The protein localises to the plastid. The protein resides in the chloroplast. In terms of biological role, one of the primary rRNA binding proteins, it binds directly to 16S rRNA where it nucleates assembly of the body of the 30S subunit. Functionally, with S5 and S12 plays an important role in translational accuracy. This chain is Small ribosomal subunit protein uS4c (rps4), found in Chaetosphaeridium globosum (Charophycean green alga).